A 313-amino-acid chain; its full sequence is Ubiquinone biosynthesis protein COQ4, mitochondrial (313 aa).

Zn(2+)-binding residues include His197, Asp198, His201, and Glu213. Positions 290–313 are disordered; that stretch reads QPPDLRELRRKQKKLPEPERENAN. Residues 303–313 are compositionally biased toward basic and acidic residues; sequence KLPEPERENAN.

It belongs to the COQ4 family. As to quaternary structure, component of a multi-subunit COQ enzyme complex, composed of at least COQ3, COQ4, COQ5, COQ6, COQ7 and COQ9. It depends on Zn(2+) as a cofactor.

Its subcellular location is the mitochondrion inner membrane. The catalysed reaction is a 4-hydroxy-3-methoxy-5-(all-trans-polyprenyl)benzoate + H(+) = a 2-methoxy-6-(all-trans-polyprenyl)phenol + CO2. It functions in the pathway cofactor biosynthesis; ubiquinone biosynthesis. In terms of biological role, lyase that catalyzes the C1-decarboxylation of 4-hydroxy-3-methoxy-5-(all-trans-polyprenyl)benzoic acid into 2-methoxy-6-(all-trans-polyprenyl)phenol during ubiquinone biosynthesis. This chain is Ubiquinone biosynthesis protein COQ4, mitochondrial, found in Meyerozyma guilliermondii (strain ATCC 6260 / CBS 566 / DSM 6381 / JCM 1539 / NBRC 10279 / NRRL Y-324) (Yeast).